The sequence spans 566 residues: Berberine bridge enzyme-like D-2 (566 aa).

The first 33 residues, 1 to 33, serve as a signal peptide directing secretion; that stretch reads MKRNISMSLQRLLIILMMISFLFTSLLVPSVSA. Cys-42 and Cys-103 are disulfide-bonded. An N-linked (GlcNAc...) asparagine glycan is attached at Asn-50. One can recognise an FAD-binding PCMH-type domain in the interval 81–257; the sequence is SKPKPTVIIV…YAWKIRLLKV (177 aa). His-118 carries the post-translational modification Pros-8alpha-FAD histidine. Residues Asn-364, Asn-378, and Asn-503 are each glycosylated (N-linked (GlcNAc...) asparagine).

Belongs to the oxygen-dependent FAD-linked oxidoreductase family. FAD serves as cofactor.

Its subcellular location is the vacuole. The protein operates within alkaloid biosynthesis; nicotine biosynthesis. Functionally, involved in the biosynthesis of pyridine alkaloid natural products, leading mainly to the production of anabasine, anatabine, nicotine and nornicotine, effective deterrents against herbivores with antiparasitic and pesticide properties (neurotoxins); nornicotine serves as the precursor in the synthesis of the carcinogen compound N'-nitrosonornicotine (NNN). Catalyzes a late oxidation step subsequent to the pyridine ring condensation reaction in the biosynthesis of alkaloids. This is Berberine bridge enzyme-like D-2 from Nicotiana tabacum (Common tobacco).